A 184-amino-acid polypeptide reads, in one-letter code: UPF0301 protein Rsph17029_2659 (184 aa).

The protein belongs to the UPF0301 (AlgH) family.

In Cereibacter sphaeroides (strain ATCC 17029 / ATH 2.4.9) (Rhodobacter sphaeroides), this protein is UPF0301 protein Rsph17029_2659.